A 612-amino-acid chain; its full sequence is Dihydroxy-acid dehydratase (612 aa).

Residue Asp-81 participates in Mg(2+) binding. [2Fe-2S] cluster is bound at residue Cys-122. Mg(2+) is bound by residues Asp-123 and Lys-124. At Lys-124 the chain carries N6-carboxylysine. Cys-195 contacts [2Fe-2S] cluster. Glu-491 serves as a coordination point for Mg(2+). Residue Ser-517 is the Proton acceptor of the active site.

It belongs to the IlvD/Edd family. As to quaternary structure, homodimer. [2Fe-2S] cluster is required as a cofactor. Requires Mg(2+) as cofactor.

It catalyses the reaction (2R)-2,3-dihydroxy-3-methylbutanoate = 3-methyl-2-oxobutanoate + H2O. The catalysed reaction is (2R,3R)-2,3-dihydroxy-3-methylpentanoate = (S)-3-methyl-2-oxopentanoate + H2O. The protein operates within amino-acid biosynthesis; L-isoleucine biosynthesis; L-isoleucine from 2-oxobutanoate: step 3/4. Its pathway is amino-acid biosynthesis; L-valine biosynthesis; L-valine from pyruvate: step 3/4. Its function is as follows. Functions in the biosynthesis of branched-chain amino acids. Catalyzes the dehydration of (2R,3R)-2,3-dihydroxy-3-methylpentanoate (2,3-dihydroxy-3-methylvalerate) into 2-oxo-3-methylpentanoate (2-oxo-3-methylvalerate) and of (2R)-2,3-dihydroxy-3-methylbutanoate (2,3-dihydroxyisovalerate) into 2-oxo-3-methylbutanoate (2-oxoisovalerate), the penultimate precursor to L-isoleucine and L-valine, respectively. The sequence is that of Dihydroxy-acid dehydratase from Sinorhizobium fredii (strain NBRC 101917 / NGR234).